The sequence spans 341 residues: L-threonine 3-dehydrogenase (341 aa).

C38 provides a ligand contact to Zn(2+). Residues T40 and H43 each act as charge relay system in the active site. Residues H63, E64, C93, C96, C99, and C107 each contribute to the Zn(2+) site. Residues I175, D195, R200, 262-264 (LGI), and 286-287 (IY) contribute to the NAD(+) site.

This sequence belongs to the zinc-containing alcohol dehydrogenase family. As to quaternary structure, homotetramer. Requires Zn(2+) as cofactor.

The protein resides in the cytoplasm. The catalysed reaction is L-threonine + NAD(+) = (2S)-2-amino-3-oxobutanoate + NADH + H(+). The protein operates within amino-acid degradation; L-threonine degradation via oxydo-reductase pathway; glycine from L-threonine: step 1/2. Functionally, catalyzes the NAD(+)-dependent oxidation of L-threonine to 2-amino-3-ketobutyrate. The chain is L-threonine 3-dehydrogenase from Shewanella sp. (strain W3-18-1).